Reading from the N-terminus, the 138-residue chain is ATP synthase epsilon chain (138 aa).

It belongs to the ATPase epsilon chain family. In terms of assembly, F-type ATPases have 2 components, CF(1) - the catalytic core - and CF(0) - the membrane proton channel. CF(1) has five subunits: alpha(3), beta(3), gamma(1), delta(1), epsilon(1). CF(0) has three main subunits: a, b and c.

It is found in the cell inner membrane. Its function is as follows. Produces ATP from ADP in the presence of a proton gradient across the membrane. This Bartonella henselae (strain ATCC 49882 / DSM 28221 / CCUG 30454 / Houston 1) (Rochalimaea henselae) protein is ATP synthase epsilon chain.